Here is a 486-residue protein sequence, read N- to C-terminus: Aspartyl/glutamyl-tRNA(Asn/Gln) amidotransferase subunit B (486 aa).

Belongs to the GatB/GatE family. GatB subfamily. As to quaternary structure, heterotrimer of A, B and C subunits.

The enzyme catalyses L-glutamyl-tRNA(Gln) + L-glutamine + ATP + H2O = L-glutaminyl-tRNA(Gln) + L-glutamate + ADP + phosphate + H(+). It catalyses the reaction L-aspartyl-tRNA(Asn) + L-glutamine + ATP + H2O = L-asparaginyl-tRNA(Asn) + L-glutamate + ADP + phosphate + 2 H(+). Allows the formation of correctly charged Asn-tRNA(Asn) or Gln-tRNA(Gln) through the transamidation of misacylated Asp-tRNA(Asn) or Glu-tRNA(Gln) in organisms which lack either or both of asparaginyl-tRNA or glutaminyl-tRNA synthetases. The reaction takes place in the presence of glutamine and ATP through an activated phospho-Asp-tRNA(Asn) or phospho-Glu-tRNA(Gln). The sequence is that of Aspartyl/glutamyl-tRNA(Asn/Gln) amidotransferase subunit B from Leptospira interrogans serogroup Icterohaemorrhagiae serovar Lai (strain 56601).